The sequence spans 262 residues: Adenosylcobinamide-GDP ribazoletransferase (262 aa).

The next 6 helical transmembrane spans lie at Y43–Q63, L66–F86, G120–L140, A146–F166, L191–L211, and A242–L262.

The protein belongs to the CobS family. It depends on Mg(2+) as a cofactor.

The protein resides in the cell inner membrane. It carries out the reaction alpha-ribazole + adenosylcob(III)inamide-GDP = adenosylcob(III)alamin + GMP + H(+). It catalyses the reaction alpha-ribazole 5'-phosphate + adenosylcob(III)inamide-GDP = adenosylcob(III)alamin 5'-phosphate + GMP + H(+). It functions in the pathway cofactor biosynthesis; adenosylcobalamin biosynthesis; adenosylcobalamin from cob(II)yrinate a,c-diamide: step 7/7. In terms of biological role, joins adenosylcobinamide-GDP and alpha-ribazole to generate adenosylcobalamin (Ado-cobalamin). Also synthesizes adenosylcobalamin 5'-phosphate from adenosylcobinamide-GDP and alpha-ribazole 5'-phosphate. The protein is Adenosylcobinamide-GDP ribazoletransferase of Shewanella baltica (strain OS155 / ATCC BAA-1091).